The primary structure comprises 51 residues: DNA-directed RNA polymerase subunit Rpo12 (51 aa).

C14, C29, and C32 together coordinate Zn(2+).

Belongs to the archaeal Rpo12/eukaryotic RPC10 RNA polymerase subunit family. As to quaternary structure, part of the RNA polymerase complex. Zn(2+) is required as a cofactor.

It localises to the cytoplasm. It carries out the reaction RNA(n) + a ribonucleoside 5'-triphosphate = RNA(n+1) + diphosphate. In terms of biological role, DNA-dependent RNA polymerase (RNAP) catalyzes the transcription of DNA into RNA using the four ribonucleoside triphosphates as substrates. The sequence is that of DNA-directed RNA polymerase subunit Rpo12 from Methanopyrus kandleri (strain AV19 / DSM 6324 / JCM 9639 / NBRC 100938).